The following is a 256-amino-acid chain: Fibroblast growth factor 3 (256 aa).

The signal sequence occupies residues 1 to 18; that stretch reads MVIILLLLLLSFLDPSLE. 3 disordered regions span residues 31-54, 151-176, and 219-256; these read APCARGQACDPRQRRDAGGRGGVY, RHHATTQPPPTGSGIGGSKRRASSKR, and LRESQRHHTGSHRAPVGRAERRRRRHRGSKGHNRRADI. Over residues 238 to 256 the composition is skewed to basic residues; sequence ERRRRRHRGSKGHNRRADI.

The protein belongs to the heparin-binding growth factors family.

It localises to the secreted. Functionally, plays an important role in the regulation of embryonic development, cell proliferation, and cell differentiation. In Danio rerio (Zebrafish), this protein is Fibroblast growth factor 3 (fgf3).